The primary structure comprises 308 residues: Testis-specific Y-encoded protein 1 (308 aa).

It belongs to the nucleosome assembly protein (NAP) family. Phosphorylated. Specifically expressed in testicular tissues. Isoform 1 and isoform 2 are expressed in spermatogonia and spermatocytes. Found in early testicular carcinoma in situ, spermatogonial cells in testicular tissues of 46,X,Y female and in prostate cancer cell lines.

It is found in the cytoplasm. Its subcellular location is the nucleus. May be involved in sperm differentiation and proliferation. The polypeptide is Testis-specific Y-encoded protein 1 (TSPY1) (Homo sapiens (Human)).